A 980-amino-acid chain; its full sequence is Zinc finger BED domain-containing protein 6 (980 aa).

The tract at residues 1–89 (MSVCTLSVPV…ILAKKFSKDL (89 aa)) is required for nucleolar localization. The segment at 89–109 (LGSGRPVADAPASLASGAPEQ) is disordered. Residues 130-187 (AKTSIVWHFFHVDPQYTWRAICNLCEKSVSRGKPGSHLGTSTLQRHLQARHSPHWTRA) form a BED-type 1 zinc finger. Zn(2+) is bound by residues cysteine 151, cysteine 154, histidine 175, and histidine 180. The interval 201–239 (LDLSLSPPSPGSNGSFEYIPTDSVDENRMGKKRDKSASD) is disordered. A compositionally biased stretch (low complexity) spans 203–215 (LSLSPPSPGSNGS). Residues 265-322 (AKTSAVWNFFYTDPQHISRAVCNICKRSVSRGRPGSHLGTSTLQRHLQATHPIHWAVA) form a BED-type 2 zinc finger. Residues cysteine 286, cysteine 289, histidine 310, and histidine 315 each coordinate Zn(2+). A disordered region spans residues 328–397 (AIGNGLDETE…ADQDNPVHAQ (70 aa)). The segment covering 360–373 (TAEDLSDSDTDEPP) has biased composition (acidic residues). A Phosphoserine modification is found at serine 383. The interval 868–950 (VVDEYFKEKY…EQLIFLKMNL (83 aa)) is HATC (Hobo-Ac-Tam3) domain.

Expressed in pancreatic islet cells and weakly expressed in surrounding exocrine tissues (at protein level). Expressed in muscle and brain (at protein level). Shows broad tissue distribution with expression detected in brain, stomach, intestine, heart, kidney, liver, lung, skeletal muscle, ovary, spleen, tail and testis.

The protein localises to the nucleus. It is found in the nucleolus. It localises to the cytoplasm. In terms of biological role, transcriptional repressor which binds to the consensus sequence 5'-GCTCGC-3', transcription regulation may be tissue-specific. Regulates the expression of target genes such as: IGF2, PGAP6/TMEM8, ENHO, and PIANP. Acts as a transcriptional repressor of growth factor IGF2, thereby negatively regulating postnatal growth of muscles and internal organs, especially in females. Negatively regulates myoblast differentiation and myoblast mitochondrial activity via its regulation of IGF2 transcription. Negatively regulates the cell cycle of myoblasts, potentially via transcriptional regulation of the E2F family of transcription factors such as: E2F1 and E2F2. Positively regulates the cell cycle and survival of pancreatic beta cells. Binds to the CDH2 gene and may directly repress CDH2 transcription. Probably by controlling CDH2 expression, regulates pancreatic beta cell adhesion, and formation of cell-to-cell junctions between pancreatic beta cells and neural crest stem cells. May also play a role in embryonic beta cell differentiation. May play a role in insulin sensitivity and glucose clearance. The polypeptide is Zinc finger BED domain-containing protein 6 (Mus musculus (Mouse)).